The primary structure comprises 401 residues: Formate-dependent phosphoribosylglycinamide formyltransferase (401 aa).

N(1)-(5-phospho-beta-D-ribosyl)glycinamide-binding positions include 27 to 28 and E87; that span reads EL. ATP is bound by residues R119, K160, 165–170, 200–203, and E208; these read SSGKGQ and EELV. Positions 124-313 constitute an ATP-grasp domain; sequence EFAAEEVGVT…QFDLHLRAIL (190 aa). Residues E272 and E284 each contribute to the Mg(2+) site. Residues D291, K361, and 368-369 contribute to the N(1)-(5-phospho-beta-D-ribosyl)glycinamide site; that span reads RR.

This sequence belongs to the PurK/PurT family. As to quaternary structure, homodimer.

It catalyses the reaction N(1)-(5-phospho-beta-D-ribosyl)glycinamide + formate + ATP = N(2)-formyl-N(1)-(5-phospho-beta-D-ribosyl)glycinamide + ADP + phosphate + H(+). It functions in the pathway purine metabolism; IMP biosynthesis via de novo pathway; N(2)-formyl-N(1)-(5-phospho-D-ribosyl)glycinamide from N(1)-(5-phospho-D-ribosyl)glycinamide (formate route): step 1/1. In terms of biological role, involved in the de novo purine biosynthesis. Catalyzes the transfer of formate to 5-phospho-ribosyl-glycinamide (GAR), producing 5-phospho-ribosyl-N-formylglycinamide (FGAR). Formate is provided by PurU via hydrolysis of 10-formyl-tetrahydrofolate. The protein is Formate-dependent phosphoribosylglycinamide formyltransferase of Haloquadratum walsbyi (strain DSM 16790 / HBSQ001).